Reading from the N-terminus, the 585-residue chain is SLAIN motif-containing protein-like (585 aa).

5 disordered regions span residues 1 to 34 (MVVP…PNLT), 55 to 125 (NQTL…RVEE), 324 to 365 (QDYA…EDEC), 402 to 476 (PRLS…SDGQ), and 492 to 585 (GSMS…DGCY). Over residues 68-83 (GGTNNSNLKAGSNINN) the composition is skewed to polar residues. A compositionally biased stretch (low complexity) spans 327–345 (ASTSASRRSSSASLQSLRR). Residues 351–365 (QEFDSYSQEDEEDEC) are compositionally biased toward acidic residues. Composition is skewed to polar residues over residues 425–434 (PNLTPRTSLR), 441–476 (NSRS…SDGQ), and 549–563 (ASPS…TPRS). Positions 575–585 (LTDESWKDGCY) are enriched in basic and acidic residues.

The protein belongs to the SLAIN motif-containing family.

This Danio rerio (Zebrafish) protein is SLAIN motif-containing protein-like.